The chain runs to 479 residues: Glutathione gamma-glutamylcysteinyltransferase 3 (479 aa).

The 221-residue stretch at 1–221 (MASAGLYRRV…GYMIISKLKR (221 aa)) folds into the Peptidase C83 domain. Active-site residues include C56, H162, and D180.

Belongs to the phytochelatin synthase family. As to expression, expressed in roots, nodules and leaves.

The catalysed reaction is [Glu(-Cys)](n)-Gly + glutathione + H(+) = [Glu(-Cys)](n+1)-Gly + glycine. With respect to regulation, requires cadmium for activity. Its function is as follows. Involved in the synthesis of phytochelatins (PC) and homophytochelatins (hPC), the heavy-metal-binding peptides of plants. The sequence is that of Glutathione gamma-glutamylcysteinyltransferase 3 (PCS3) from Lotus japonicus (Lotus corniculatus var. japonicus).